The following is a 100-amino-acid chain: Nucleoid-associated protein MYPU_0500 (100 aa).

The protein belongs to the YbaB/EbfC family. Homodimer.

Its subcellular location is the cytoplasm. It is found in the nucleoid. Functionally, binds to DNA and alters its conformation. May be involved in regulation of gene expression, nucleoid organization and DNA protection. In Mycoplasmopsis pulmonis (strain UAB CTIP) (Mycoplasma pulmonis), this protein is Nucleoid-associated protein MYPU_0500.